Reading from the N-terminus, the 186-residue chain is Peptidyl-tRNA hydrolase (186 aa).

Tyr-14 lines the tRNA pocket. Residue His-19 is the Proton acceptor of the active site. TRNA contacts are provided by Phe-64, Asn-66, and Asn-112.

This sequence belongs to the PTH family. Monomer.

Its subcellular location is the cytoplasm. It carries out the reaction an N-acyl-L-alpha-aminoacyl-tRNA + H2O = an N-acyl-L-amino acid + a tRNA + H(+). In terms of biological role, hydrolyzes ribosome-free peptidyl-tRNAs (with 1 or more amino acids incorporated), which drop off the ribosome during protein synthesis, or as a result of ribosome stalling. Functionally, catalyzes the release of premature peptidyl moieties from peptidyl-tRNA molecules trapped in stalled 50S ribosomal subunits, and thus maintains levels of free tRNAs and 50S ribosomes. The chain is Peptidyl-tRNA hydrolase from Mycoplasma mycoides subsp. mycoides SC (strain CCUG 32753 / NCTC 10114 / PG1).